Consider the following 319-residue polypeptide: Acetyl-coenzyme A carboxylase carboxyl transferase subunit alpha (319 aa).

Positions 39-293 (KLEQKAAQLL…GDAIAEELKG (255 aa)) constitute a CoA carboxyltransferase C-terminal domain.

It belongs to the AccA family. As to quaternary structure, acetyl-CoA carboxylase is a heterohexamer composed of biotin carboxyl carrier protein (AccB), biotin carboxylase (AccC) and two subunits each of ACCase subunit alpha (AccA) and ACCase subunit beta (AccD).

It is found in the cytoplasm. The enzyme catalyses N(6)-carboxybiotinyl-L-lysyl-[protein] + acetyl-CoA = N(6)-biotinyl-L-lysyl-[protein] + malonyl-CoA. Its pathway is lipid metabolism; malonyl-CoA biosynthesis; malonyl-CoA from acetyl-CoA: step 1/1. In terms of biological role, component of the acetyl coenzyme A carboxylase (ACC) complex. First, biotin carboxylase catalyzes the carboxylation of biotin on its carrier protein (BCCP) and then the CO(2) group is transferred by the carboxyltransferase to acetyl-CoA to form malonyl-CoA. The protein is Acetyl-coenzyme A carboxylase carboxyl transferase subunit alpha of Parvibaculum lavamentivorans (strain DS-1 / DSM 13023 / NCIMB 13966).